Consider the following 644-residue polypeptide: SURP and G-patch domain-containing protein 1 (644 aa).

Basic and acidic residues predominate over residues 44–54; the sequence is REIEARMEQKA. 2 disordered regions span residues 44–74 and 98–122; these read REIE…ADAQ and AQAS…KRPL. Position 128 is a phosphothreonine (threonine 128). One copy of the SURP motif 1 repeat lies at 188–230; it reads VIEKLARFVAEGGPELEKVAMEDYKDNPAFTFLHDKNSREFLY. Serine 253 is subject to Phosphoserine. The stretch at 263 to 306 is one SURP motif 2 repeat; sequence LAEKLARFIADGGPEVETIALQNNRENQAFSFLYDPNSQGYRYY. 2 disordered regions span residues 316–342 and 360–412; these read AKAG…PEAL and PAVN…PSPL. The residue at position 323 (serine 323) is a Phosphoserine. The segment covering 360 to 369 has biased composition (pro residues); that stretch reads PAVNPTPSIP. Positions 379–385 match the Nuclear localization signal motif; that stretch reads KRKRKSR. 4 positions are modified to phosphoserine: serine 408, serine 410, serine 413, and serine 484. In terms of domain architecture, G-patch spans 561–608; sequence VENIGYQMLMKMGWKEGEGLGTEGQGIKNPVNKGATTIDGAGFGIDRP.

In terms of assembly, component of the spliceosome.

The protein resides in the nucleus. In terms of biological role, plays a role in pre-mRNA splicing. This chain is SURP and G-patch domain-containing protein 1 (Sugp1), found in Rattus norvegicus (Rat).